The sequence spans 555 residues: High-affinity gluconate transporter ght3 (555 aa).

The Cytoplasmic portion of the chain corresponds to 1–9 (MNRFITSIL). Residues 10-30 (VVFISMSGWLQGADTGSISGI) form a helical membrane-spanning segment. The Extracellular portion of the chain corresponds to 31 to 58 (LGMRDFQSRFADRYNPISNSYSYSAWRQ). A helical membrane pass occupies residues 59–79 (ALLTGTINAGCLFGAMLSSPF). At 80-87 (TERIGKKY) the chain is on the cytoplasmic side. A helical membrane pass occupies residues 88 to 108 (SICFFSGVYIIAELLLVTAVP). At 109-112 (SWIQ) the chain is on the extracellular side. The chain crosses the membrane as a helical span at residues 113-133 (VLVGKILAGVGIGALSVLSPG). The Cytoplasmic segment spans residues 134–144 (YQSEVAPPQIR). Residues 145–165 (GAVVATYQIFSTGAALVAACI) traverse the membrane as a helical segment. The Extracellular segment spans residues 166-179 (NMGTHKLRKTASWR). A helical membrane pass occupies residues 180 to 200 (TSFGINMLWGILLMVGVLFLP). At 201-266 (ESPRYLIYKG…IFGKDIRYRT (66 aa)) the chain is on the cytoplasmic side. The helical transmembrane segment at 267-285 (CLGFLVMLFRELIGNNYYF) threads the bilayer. The Extracellular portion of the chain corresponds to 286 to 301 (YYATQVFKGTGMTDIF). A helical membrane pass occupies residues 302-322 (LPAVILGAINFGTTFGALYTI). Residues 323–328 (DNLGRR) are Cytoplasmic-facing. A helical transmembrane segment spans residues 329–349 (NPLIFGAAFQSICFFIYAAVG). Over 350–363 (DRKLIYKNGTSDHR) the chain is Extracellular. N-linked (GlcNAc...) asparagine glycosylation occurs at Asn-357. A helical membrane pass occupies residues 364 to 384 (AGSVMIVFSCLFLFSYCCSWG). Topologically, residues 385–404 (PMGWVIVGETFPIRYRSKCA) are cytoplasmic. A helical membrane pass occupies residues 405–425 (SVATSGNWLGNFMISFFTPFI). Over 426–432 (NNAIGFK) the chain is Extracellular. Residues 433–453 (LGYIYACINLFSSFMIFFLAK) form a helical membrane-spanning segment. Residues 454–555 (ETKGLTLEEV…FSEDSHPTYI (102 aa)) lie on the Cytoplasmic side of the membrane. The segment covering 492–509 (KEEEKREREKSKGIRGQE) has biased composition (basic and acidic residues). A disordered region spans residues 492 to 555 (KEEEKREREK…FSEDSHPTYI (64 aa)). Residues 510-521 (EEFIENADEDNN) show a composition bias toward acidic residues. A compositionally biased stretch (low complexity) spans 522-534 (DSSSSSGSVVSAV). Positions 545–555 (RFSEDSHPTYI) are enriched in basic and acidic residues.

This sequence belongs to the major facilitator superfamily. Sugar transporter (TC 2.A.1.1) family.

It is found in the membrane. Its function is as follows. High-affinity gluconate transporter. In Schizosaccharomyces pombe (strain 972 / ATCC 24843) (Fission yeast), this protein is High-affinity gluconate transporter ght3 (ght3).